Reading from the N-terminus, the 208-residue chain is Small ribosomal subunit protein uS4 (208 aa).

The 62-residue stretch at 97–158 folds into the S4 RNA-binding domain; the sequence is TRLDNVIYRM…RAQKYLCVQE (62 aa).

Belongs to the universal ribosomal protein uS4 family. In terms of assembly, part of the 30S ribosomal subunit. Contacts protein S5. The interaction surface between S4 and S5 is involved in control of translational fidelity.

One of the primary rRNA binding proteins, it binds directly to 16S rRNA where it nucleates assembly of the body of the 30S subunit. In terms of biological role, with S5 and S12 plays an important role in translational accuracy. The chain is Small ribosomal subunit protein uS4 from Xylella fastidiosa (strain M23).